Consider the following 384-residue polypeptide: DNA dC-&gt;dU-editing enzyme APOBEC-3G (384 aa).

Residues 1–60 (MKPHFRNPVERMYQDTFSDNFYNRPILSRRNTVWLCYEVKTKGPSRPPLDAKIFRGQVYS) form an essential for cytoplasmic localization region. 2 consecutive CMP/dCMP-type deaminase domains span residues 29–138 (RRNT…LRSL) and 214–328 (GRHE…LRTL). Threonine 32 carries the phosphothreonine; by PKA modification. 3 residues coordinate Zn(2+): histidine 65, cysteine 97, and cysteine 100. Positions 209 to 336 (ELWVRGRHET…TLAKAGAEIS (128 aa)) are necessary for homooligomerization. Residues 213-215 (RGR) are interaction with DNA. Position 218 is a phosphothreonine; by PKA and CAMK2 (threonine 218). Histidine 257 lines the Zn(2+) pocket. Glutamate 259 functions as the Proton donor in the catalytic mechanism. Zn(2+)-binding residues include cysteine 288 and cysteine 291. The tract at residues 313-320 (RIYDDQGR) is interaction with DNA.

The protein belongs to the cytidine and deoxycytidylate deaminase family. Homodimer. Homooligomer. Can bind RNA to form ribonucleoprotein complexes of high-molecular-mass (HMM) or low-molecular-mass (LMM). HMM is inactive and heterogeneous in protein composition because of binding nonselectively to cellular RNAs, which in turn are associated with variety of cellular proteins. The LMM form which is enzymatically active has few or no RNAs associated. Its ability to form homooligomer is distinct from its ability to assemble into HMM. Interacts with APOBEC3B, APOBEC3F, MOV10, AGO2, EIF4E, EIF4ENIF1, DCP2 and DDX6 in an RNA-dependent manner. Interacts with AGO1, AGO3 and PKA/PRKACA. Requires Zn(2+) as cofactor.

It is found in the cytoplasm. Its subcellular location is the nucleus. The protein localises to the P-body. The enzyme catalyses a 2'-deoxycytidine in single-stranded DNA + H2O + H(+) = a 2'-deoxyuridine in single-stranded DNA + NH4(+). Its function is as follows. DNA deaminase (cytidine deaminase) which acts as an inhibitor of retrovirus replication and retrotransposon mobility via deaminase-dependent and -independent mechanisms. After the penetration of retroviral nucleocapsids into target cells of infection and the initiation of reverse transcription, it can induce the conversion of cytosine to uracil in the minus-sense single-strand viral DNA, leading to G-to-A hypermutations in the subsequent plus-strand viral DNA. The resultant detrimental levels of mutations in the proviral genome, along with a deamination-independent mechanism that works prior to the proviral integration, together exert efficient antiretroviral effects in infected target cells. Selectively targets single-stranded DNA and does not deaminate double-stranded DNA or single- or double-stranded RNA. May inhibit the mobility of LTR retrotransposons. This chain is DNA dC-&gt;dU-editing enzyme APOBEC-3G (APOBEC3G), found in Pan paniscus (Pygmy chimpanzee).